Consider the following 159-residue polypeptide: Cyclic pyranopterin monophosphate synthase (159 aa).

Substrate-binding positions include 75-77 (LCH) and 113-114 (ME). The active site involves Asp128.

The protein belongs to the MoaC family. As to quaternary structure, homohexamer; trimer of dimers.

The catalysed reaction is (8S)-3',8-cyclo-7,8-dihydroguanosine 5'-triphosphate = cyclic pyranopterin phosphate + diphosphate. Its pathway is cofactor biosynthesis; molybdopterin biosynthesis. In terms of biological role, catalyzes the conversion of (8S)-3',8-cyclo-7,8-dihydroguanosine 5'-triphosphate to cyclic pyranopterin monophosphate (cPMP). The polypeptide is Cyclic pyranopterin monophosphate synthase (Photorhabdus laumondii subsp. laumondii (strain DSM 15139 / CIP 105565 / TT01) (Photorhabdus luminescens subsp. laumondii)).